We begin with the raw amino-acid sequence, 520 residues long: Polycomb protein PHO (520 aa).

C2H2-type zinc fingers lie at residues 357–381 (IACP…LHTH), 386–408 (HVCA…QLVH), 414–438 (FQCT…VRIH), and 444–468 (FVCP…ILTH). Residues 475 to 497 (TSISGKSGCSNAESNSQSEDTSA) form a disordered region.

Component of the Esc/E(z) complex, composed of Esc, E(z), Su(z)12, HDAC1/Rpd3 and Caf1-55. This complex is distinct from the PRC1 complex, which contains many other PcG proteins like Pc, Ph, Psc, Su(z)2. The two complexes however cooperate and interact together during the first 3 hours of development to establish PcG silencing. Component of the chromatin remodeling Ino80 complex. Interacts with Sfmbt to form a pho-repressive complex (PhoRC).

The protein resides in the nucleus. Functionally, polycomb group (PcG) protein that binds to the 5'-CNGCCATNNNNG-3' sequence found in the regulatory regions of many genes. PcG proteins act by forming multiprotein complexes, which are required to maintain the transcriptionally repressive state of homeotic genes throughout development. PcG proteins are not required to initiate repression, but to maintain it during later stages of development. They probably act via the methylation of histones, rendering chromatin heritably changed in its expressibility. Probably targets the Esc/E(z) complex to DNA. Necessary but not sufficient to recruit a functional PcG repressive complex that represses target genes, suggesting that the recruitment of the distinct PRC1 complex is also required to allow a subsequent repression. Its function is as follows. Proposed core component of the chromatin remodeling Ino80 complex which is involved in transcriptional regulation, DNA replication and probably DNA repair. This Drosophila melanogaster (Fruit fly) protein is Polycomb protein PHO (pho).